A 297-amino-acid polypeptide reads, in one-letter code: ER membrane protein complex subunit 2 (297 aa).

Ala2 bears the N-acetylalanine mark. 3 TPR repeats span residues 87 to 120, 155 to 188, and 192 to 225; these read HRVKRLTGMRFEAMERYDDAIQLYDRILQEDPTN, QEAWHELAELYINEHDYAKAAFCLEELMMTNPHN, and CQQYAEVKYTQGGLENLELSRKYFAQALKLNNRN. Lys255 carries the N6-acetyllysine modification.

This sequence belongs to the EMC2 family. As to quaternary structure, component of the ER membrane protein complex (EMC). Interacts with WNK1 (via amphipathic alpha-helix region); promoting the ER membrane protein complex assembly by preventing EMC2 ubiquitination. In terms of processing, ubiquitinated when soluble in the cytoplasm, leading to its degradation by the proteasome. Interaction with EMC2 prevents its ubiquitination and degradation.

It is found in the endoplasmic reticulum membrane. Functionally, part of the endoplasmic reticulum membrane protein complex (EMC) that enables the energy-independent insertion into endoplasmic reticulum membranes of newly synthesized membrane proteins. Preferentially accommodates proteins with transmembrane domains that are weakly hydrophobic or contain destabilizing features such as charged and aromatic residues. Involved in the cotranslational insertion of multi-pass membrane proteins in which stop-transfer membrane-anchor sequences become ER membrane spanning helices. It is also required for the post-translational insertion of tail-anchored/TA proteins in endoplasmic reticulum membranes. By mediating the proper cotranslational insertion of N-terminal transmembrane domains in an N-exo topology, with translocated N-terminus in the lumen of the ER, controls the topology of multi-pass membrane proteins like the G protein-coupled receptors. By regulating the insertion of various proteins in membranes, it is indirectly involved in many cellular processes. In Pongo abelii (Sumatran orangutan), this protein is ER membrane protein complex subunit 2.